The chain runs to 556 residues: Neurofilament light polypeptide (556 aa).

N-acetylserine is present on serine 2. The interval 2 to 94 (SSYGYDPFFP…KSIRSQERAQ (93 aa)) is head. Residues 91 to 402 (ERAQLQDLND…KLLEGEETRL (312 aa)) form the IF rod domain. A coil 1A region spans residues 95-126 (LQDLNDRFACFIERVHELEQQNKVLEAELLVL). The interval 127–139 (RQKHAEPSRFRAL) is linker 1. The tract at residues 140-235 (YEQEIRELRL…KVHEEELAEL (96 aa)) is coil 1B. Residues 236 to 254 (QAQIQYAHLSVEMDVSAKP) form a linker 12 region. Positions 255 to 273 (DLSAALRDIRAQYEKLAAR) are coil 2A. The tract at residues 274–282 (NMQNAEEWF) is linker 2. Residues 283 to 398 (RSRFTVLSES…AAYRKLLEGE (116 aa)) form a coil 2B region. A tail, subdomain A region spans residues 399-445 (ETRLSFTSVGSITSGYTQTAPTFGRSAYSGLQSTSYLMTTRSFPTYY). The tract at residues 399–556 (ETRLSFTSVG…KEETEVKKKA (158 aa)) is tail. A tail, subdomain B (acidic) region spans residues 446-556 (SSHVQEEQIE…KEETEVKKKA (111 aa)). The segment covering 464-473 (KAGEAKAAPA) has biased composition (low complexity). The interval 464–556 (KAGEAKAAPA…KEETEVKKKA (93 aa)) is disordered. Acidic residues predominate over residues 474–540 (EEGEEEEKEE…AEETGEEEKE (67 aa)). Over residues 541-556 (EKEAAGKEETEVKKKA) the composition is skewed to basic and acidic residues.

It belongs to the intermediate filament family. Forms homodimers (in vitro).

The protein localises to the cell projection. The protein resides in the axon. Its subcellular location is the cytoplasm. It localises to the cytoskeleton. Its function is as follows. Neurofilaments usually contain three intermediate filament proteins: NEFL, NEFM, and NEFH which are involved in the maintenance of neuronal caliber. May additionally cooperate with the neuronal intermediate filament proteins to form neuronal filamentous networks. The protein is Neurofilament light polypeptide (NEFL) of Coturnix japonica (Japanese quail).